Consider the following 202-residue polypeptide: Large ribosomal subunit protein bL25 (202 aa).

The protein belongs to the bacterial ribosomal protein bL25 family. CTC subfamily. As to quaternary structure, part of the 50S ribosomal subunit; part of the 5S rRNA/L5/L18/L25 subcomplex. Contacts the 5S rRNA. Binds to the 5S rRNA independently of L5 and L18.

In terms of biological role, this is one of the proteins that binds to the 5S RNA in the ribosome where it forms part of the central protuberance. In Corynebacterium efficiens (strain DSM 44549 / YS-314 / AJ 12310 / JCM 11189 / NBRC 100395), this protein is Large ribosomal subunit protein bL25.